The sequence spans 233 residues: 7-cyano-7-deazaguanine synthase (233 aa).

ATP is bound at residue 11 to 21 (FSGGQDSTTCL). C199, C214, C217, and C220 together coordinate Zn(2+).

This sequence belongs to the QueC family. Zn(2+) is required as a cofactor.

It catalyses the reaction 7-carboxy-7-deazaguanine + NH4(+) + ATP = 7-cyano-7-deazaguanine + ADP + phosphate + H2O + H(+). Its pathway is purine metabolism; 7-cyano-7-deazaguanine biosynthesis. Functionally, catalyzes the ATP-dependent conversion of 7-carboxy-7-deazaguanine (CDG) to 7-cyano-7-deazaguanine (preQ(0)). In Herminiimonas arsenicoxydans, this protein is 7-cyano-7-deazaguanine synthase.